We begin with the raw amino-acid sequence, 209 residues long: ATP phosphoribosyltransferase (209 aa).

It belongs to the ATP phosphoribosyltransferase family. Short subfamily. As to quaternary structure, heteromultimer composed of HisG and HisZ subunits.

The protein resides in the cytoplasm. It carries out the reaction 1-(5-phospho-beta-D-ribosyl)-ATP + diphosphate = 5-phospho-alpha-D-ribose 1-diphosphate + ATP. It participates in amino-acid biosynthesis; L-histidine biosynthesis; L-histidine from 5-phospho-alpha-D-ribose 1-diphosphate: step 1/9. Catalyzes the condensation of ATP and 5-phosphoribose 1-diphosphate to form N'-(5'-phosphoribosyl)-ATP (PR-ATP). Has a crucial role in the pathway because the rate of histidine biosynthesis seems to be controlled primarily by regulation of HisG enzymatic activity. The protein is ATP phosphoribosyltransferase of Caldicellulosiruptor bescii (strain ATCC BAA-1888 / DSM 6725 / KCTC 15123 / Z-1320) (Anaerocellum thermophilum).